The following is a 259-amino-acid chain: Protein unc-50 homolog B (259 aa).

Polar residues predominate over residues 1–11 (MLPTTSVSPRS). The disordered stretch occupies residues 1–21 (MLPTTSVSPRSPDNGILSPRD). Topologically, residues 1-82 (MLPTTSVSPR…TKDQWARDDP (82 aa)) are cytoplasmic. A helical membrane pass occupies residues 83–103 (AFLVLLGIWLCVSTVGFGFVL). The Lumenal portion of the chain corresponds to 104 to 109 (DMSFFE). Residues 110 to 130 (TFTLLLWVVFIDCVGVGLLIA) traverse the membrane as a helical segment. The Cytoplasmic portion of the chain corresponds to 131–158 (TSMWFVSNKYMVNRQGKDYDVEWGYTFD). A helical transmembrane segment spans residues 159–179 (VHLNAFYPLLVILHFIQLFFI). Over 180–181 (NH) the chain is Lumenal. Residues 182–202 (VILTGWFIGCFVGNTLWLIAI) traverse the membrane as a helical segment. Over 203-222 (GYYIYITFLGYSALPFLKNT) the chain is Cytoplasmic. Residues 223–243 (VVLLYPFAALALLYILSLALG) traverse the membrane as a helical segment. Residues 244–259 (WNFTAKLCLFYKYRVR) lie on the Lumenal side of the membrane.

It belongs to the unc-50 family.

The protein resides in the nucleus inner membrane. The protein localises to the golgi apparatus membrane. In terms of biological role, involved in the cell surface expression of neuronal nicotinic receptors. Binds RNA. This chain is Protein unc-50 homolog B (unc50-b), found in Xenopus laevis (African clawed frog).